Reading from the N-terminus, the 343-residue chain is RNA-binding protein 43 (343 aa).

One can recognise an RRM domain in the interval 15–90 (RTVVVSGLPV…PLLTVSHFSE (76 aa)). The disordered stretch occupies residues 170–200 (RRNWTGQNPRRVLQKNENSAPTLGTSVPEPA). Polar residues predominate over residues 184-194 (KNENSAPTLGT).

The sequence is that of RNA-binding protein 43 (Rbm43) from Rattus norvegicus (Rat).